A 192-amino-acid chain; its full sequence is Orotate phosphoribosyltransferase (192 aa).

116-124 is a binding site for 5-phospho-alpha-D-ribose 1-diphosphate; it reads EDVVTTGKS. T120 and R148 together coordinate orotate.

This sequence belongs to the purine/pyrimidine phosphoribosyltransferase family. PyrE subfamily. As to quaternary structure, homodimer. Requires Mg(2+) as cofactor.

The enzyme catalyses orotidine 5'-phosphate + diphosphate = orotate + 5-phospho-alpha-D-ribose 1-diphosphate. Its pathway is pyrimidine metabolism; UMP biosynthesis via de novo pathway; UMP from orotate: step 1/2. In terms of biological role, catalyzes the transfer of a ribosyl phosphate group from 5-phosphoribose 1-diphosphate to orotate, leading to the formation of orotidine monophosphate (OMP). This is Orotate phosphoribosyltransferase from Clostridium perfringens (strain ATCC 13124 / DSM 756 / JCM 1290 / NCIMB 6125 / NCTC 8237 / Type A).